A 1154-amino-acid polypeptide reads, in one-letter code: Spike glycoprotein (1154 aa).

A signal peptide spans 1–18 (MLERSLLLATLLSALCSA). Residues 19–1096 (NLFGNNSYVY…LKTYIKWPWY (1078 aa)) are Extracellular-facing. Residues Asn-23, Asn-74, Asn-102, Asn-139, Asn-145, Asn-164, Asn-179, Asn-213, Asn-238, Asn-248, Asn-265, Asn-272, Asn-277, Asn-307, Asn-426, Asn-448, Asn-514, Asn-531, Asn-543, Asn-580, Asn-592, Asn-670, and Asn-677 are each glycosylated (N-linked (GlcNAc...) asparagine; by host). The interval 770–875 (IPFATQLQAR…QVDRIITGRL (106 aa)) is heptad repeat 1 (HR1). Positions 823-867 (QDVVNKQSSILTETMASLNKNFGAISSVLQDIYQQLDSIQADAQV) form a coiled coil. 7 N-linked (GlcNAc...) asparagine; by host glycosylation sites follow: Asn-948, Asn-961, Asn-980, Asn-1015, Asn-1039, Asn-1052, and Asn-1075. The heptad repeat 2 (HR2) stretch occupies residues 1025-1106 (NDDFDFDDEL…VWLAIAFATI (82 aa)). Positions 1056-1084 (PILDIGSEIDRIQGVIQGLNDSLIDLETL) form a coiled coil. A helical transmembrane segment spans residues 1097-1117 (VWLAIAFATIIFILILGWLFF). Residues 1118–1154 (MTGCCGCCCGCFGIIPLMSKCGKKSSYYTTFDNDVVT) lie on the Cytoplasmic side of the membrane.

The protein belongs to the gammacoronaviruses spike protein family. In terms of assembly, homotrimer; each monomer consists of a S1 and a S2 subunit. The resulting peplomers protrude from the virus surface as spikes. In terms of processing, specific enzymatic cleavages in vivo yield mature proteins. The precursor is processed into S1 and S2 by host cell furin or furin-like protease to yield the mature S1 and S2 proteins. The cleavage site between S1 and S2 requires the optimal sequence [KR]-X-[KR]-R. Additionally, a second cleavage leads to the release of a fusion peptide after viral attachment to host cell receptor.

It localises to the virion membrane. The protein resides in the host endoplasmic reticulum-Golgi intermediate compartment membrane. Functionally, attaches the virion to the host cell membrane by interacting with sialic acids, initiating the infection. In terms of biological role, mediates fusion of the virion and cellular membranes by acting as a class I viral fusion protein. Under the current model, the protein has at least 3 conformational states: pre-fusion native state, pre-hairpin intermediate state, and post-fusion hairpin state. During viral and target cell membrane fusion, the coiled coil regions (heptad repeats) assume a trimer-of-hairpins structure, positioning the fusion peptide in close proximity to the C-terminal region of the ectodomain. The formation of this structure appears to drive apposition and subsequent fusion of viral and target cell membranes. Its function is as follows. Acts as a viral fusion peptide after S2 cleavage occurring upon virus endocytosis. The polypeptide is Spike glycoprotein (Gallus gallus (Chicken)).